The chain runs to 246 residues: Probable H/ACA ribonucleoprotein complex subunit 1-like protein (246 aa).

Disordered stretches follow at residues 1-61 and 155-246; these read MSFR…GGYD and PQVG…TKFD. 2 RGG-box regions span residues 4-59 and 161-223; these read RGGR…GRGG and RGRG…RGRG. A compositionally biased stretch (basic and acidic residues) spans 168 to 180; that stretch reads RGGDRGRGGDRGR. Over residues 181 to 221 the composition is skewed to gly residues; the sequence is GGFGGRGGGGGGFRGGSRGGFGGGDRGGFRGGRGGDFGGRG.

The protein belongs to the GAR1 family. In terms of assembly, component of the small nucleolar ribonucleoprotein particle containing H/ACA-type snoRNAs (H/ACA snoRNPs).

It is found in the nucleus. The protein localises to the nucleolus. Functionally, required for ribosome biogenesis. Part of a complex which catalyzes pseudouridylation of rRNA. This involves the isomerization of uridine such that the ribose is subsequently attached to C5, instead of the normal N1. Pseudouridine ('psi') residues may serve to stabilize the conformation of rRNAs. This is Probable H/ACA ribonucleoprotein complex subunit 1-like protein from Caenorhabditis briggsae.